Here is a 211-residue protein sequence, read N- to C-terminus: Large ribosomal subunit protein uL4 (211 aa).

Residues 40–85 are disordered; sequence QQAHSRQGTASTLTRSEVRGGGRKPYKQKGTGRARQGSIRTPLRPG. Residues 41–54 are compositionally biased toward polar residues; sequence QAHSRQGTASTLTR. Positions 60–71 are enriched in basic residues; it reads GGRKPYKQKGTG.

Belongs to the universal ribosomal protein uL4 family. Part of the 50S ribosomal subunit.

Functionally, one of the primary rRNA binding proteins, this protein initially binds near the 5'-end of the 23S rRNA. It is important during the early stages of 50S assembly. It makes multiple contacts with different domains of the 23S rRNA in the assembled 50S subunit and ribosome. Its function is as follows. Forms part of the polypeptide exit tunnel. This is Large ribosomal subunit protein uL4 from Prochlorococcus marinus (strain NATL2A).